Reading from the N-terminus, the 119-residue chain is MAVKIRLAKKGRKKLALYDIVVADQRAPRDGRFIEKLGNYNPNTNPSTVVLHEDKVIQWLFNGAQPTNTVKNILSSQGILLKRHLQIGVKKGAITQEEADKRFLVWKESKTQKPGKFKA.

This sequence belongs to the bacterial ribosomal protein bS16 family.

The polypeptide is Small ribosomal subunit protein bS16 (Amoebophilus asiaticus (strain 5a2)).